Consider the following 149-residue polypeptide: Protein Rv2250A (149 aa).

This Mycobacterium tuberculosis (strain ATCC 25618 / H37Rv) protein is Protein Rv2250A.